Reading from the N-terminus, the 191-residue chain is uncharacterized protein (191 aa).

Residues 1-22 (MKSLRLMLCAMPLMLTGCSTMS) form the signal peptide.

This is an uncharacterized protein from Escherichia coli (strain K12).